We begin with the raw amino-acid sequence, 452 residues long: MGACLGACSLLSCASCLCGSAPCILCSCCPCSHNSTLSRLFFTVFLFLGVLVCVIMLSPGVESQLYKLPWVCNEGTGSHVVLQGHIDCGSLLGHRAVYRMCFAMAAFFFLFSLLMVCVRSSRDPRAAIQNGFWFFKFLIFVGITVGAFYIPDGSFSNIWFYFGVVGSFIFLLIQLLLLIDFAHSWNQRWLCKAEECDSRAWYAGLFFFTLLFYALSITAVALLFVYYTQPGACYEGKVFIGLNLTLCVCVSIVAILPKIQDAQPNSGLLQASVITLYTMFVTWLALSNVPDQKCNPHLLTHFGNGTVLAGPEGYETHWWDAPSIVGLVVFILCTVFISLRSSDHRQVNSLMQTEECPPVLDATQQQVVSEGRAFDNEQDGVTYSYSFFHLCLVLASVHIMMTLTNWYRPGETRKMISTWTAVWVKICASWTGLLLYLWTLVAPLLLPNRDFS.

Transmembrane regions (helical) follow at residues 5–25 (LGAC…PCIL), 41–61 (FFTV…SPGV), 96–116 (AVYR…LLMV), 131–151 (GFWF…FYIP), 158–178 (IWFY…LLLL), 205–225 (LFFF…LLFV), 236–256 (GKVF…VAIL), 266–286 (SGLL…WLAL), 319–339 (WDAP…FISL), 387–407 (FFHL…TNWY), and 426–446 (ICAS…PLLL).

The protein belongs to the TDE1 family.

Its subcellular location is the cell membrane. The enzyme catalyses a 1,2-diacyl-sn-glycero-3-phospho-L-serine(in) = a 1,2-diacyl-sn-glycero-3-phospho-L-serine(out). The catalysed reaction is a 1,2-diacyl-sn-glycero-3-phosphocholine(in) = a 1,2-diacyl-sn-glycero-3-phosphocholine(out). It carries out the reaction a 1,2-diacyl-sn-glycero-3-phosphoethanolamine(in) = a 1,2-diacyl-sn-glycero-3-phosphoethanolamine(out). Functionally, non-ATP-dependent, non-specific lipid transporter for phosphatidylserine, phosphatidylcholine, and phosphatidylethanolamine. Functions as a scramblase that flips lipids in both directions across the membrane. In contrast to SERINC3 and SERINC5, has no effect on gammaretrovirus particles infectivity. The polypeptide is Serine incorporator 2 (SERINC2) (Bos taurus (Bovine)).